The primary structure comprises 149 residues: Transcriptional regulator MraZ (149 aa).

SpoVT-AbrB domains are found at residues 7 to 54 (KYVN…GISH) and 83 to 126 (ALQL…QPQN).

It belongs to the MraZ family. In terms of assembly, forms oligomers.

It localises to the cytoplasm. The protein resides in the nucleoid. This Rickettsia canadensis (strain McKiel) protein is Transcriptional regulator MraZ.